The chain runs to 262 residues: NAC domain-containing protein 71 (262 aa).

Positions 6–160 constitute an NAC domain; that stretch reads LPPGFRFHPT…AFALCRVVKK (155 aa). Residues 107–166 mediate DNA binding; sequence AGYRKTLVFYEGRAPLGDRTNWFMHEYRLCDIDDHSQKSPNFKGAFALCRVVKKNELKKN.

The protein resides in the nucleus. Transcription factor involved in tissue reunion of wounded inflorescence stems. Required for the division of pith cells in the reunion process, which is dependent on polar-transported auxin and the wound-inducible hormones ethylene and jasmonate. Binds to the promoters of XTH19 and XTH20 to induce their expression via auxin signaling. XTH19 and XTH20 are involved in cell proliferation in the tissue reunion process of incised stems. Involved in hypocotyl graft union formation. Required for the auxin- mediated promotion of vascular tissue proliferation during hypocotyl graft attachment. This chain is NAC domain-containing protein 71, found in Arabidopsis thaliana (Mouse-ear cress).